The primary structure comprises 191 residues: Thymidylate kinase (191 aa).

7–14 (GVDGVGKS) provides a ligand contact to ATP.

It belongs to the thymidylate kinase family.

It carries out the reaction dTMP + ATP = dTDP + ADP. Functionally, phosphorylation of dTMP to form dTDP in both de novo and salvage pathways of dTTP synthesis. This is Thymidylate kinase from Helicobacter pylori (strain HPAG1).